Here is a 797-residue protein sequence, read N- to C-terminus: Ent-atiserene synthase KSL1, chloroplastic (797 aa).

Residues L1–M48 constitute a chloroplast transit peptide. Low complexity predominate over residues S21 to G32. Positions S21–P47 are disordered. Mg(2+)-binding residues include D547, D551, N691, and E699. A DDXXD motif motif is present at residues D547–D551.

It belongs to the terpene synthase family. The cofactor is Mg(2+).

It is found in the plastid. It localises to the chloroplast. It catalyses the reaction ent-copalyl diphosphate = ent-atiserene + diphosphate. It participates in secondary metabolite biosynthesis; terpenoid biosynthesis. Involved in the biosynthesis of ent-kaurene diterpenoids natural products such as oridonin, miltiradiene, eriocalyxin B and nezukol, known to exhibit antitumor, anti-inflammatory and antibacterial activities. Catalyzes the conversion of ent-copalyl diphosphate (ent-CPP) to ent-atiserene. This is Ent-atiserene synthase KSL1, chloroplastic from Isodon japonicus (Scutellaria japonica).